The chain runs to 396 residues: Cytochrome P450 121 (396 aa).

Cys345 contacts heme.

This sequence belongs to the cytochrome P450 family. Heme is required as a cofactor.

It is found in the cytoplasm. The protein is Cytochrome P450 121 (cyp121) of Mycobacterium bovis (strain ATCC BAA-935 / AF2122/97).